A 489-amino-acid chain; its full sequence is Acetylcholine receptor subunit beta (489 aa).

Positions 1-20 are cleaved as a signal peptide; the sequence is NSGALLWPLIWGLLLIGTQA. Over 21–235 the chain is Extracellular; the sequence is LDKEAQLRDK…ITFYLVIQRK (215 aa). N-linked (GlcNAc...) asparagine glycans are attached at residues Asn135 and Asn161. A disulfide bridge links Cys148 with Cys162. 3 helical membrane passes run 236–260, 268–286, and 302–323; these read PLFY…VFYL, MTLS…LLLA, and YLIF…VLNL. Topologically, residues 324 to 457 are cytoplasmic; that stretch reads HHRSPNTHHM…WQYVAMVVDR (134 aa). A helical membrane pass occupies residues 458-476; sequence LFLWTFIAFTSLGTLSIFL.

Belongs to the ligand-gated ion channel (TC 1.A.9) family. Acetylcholine receptor (TC 1.A.9.1) subfamily. Beta-1/CHRNB1 sub-subfamily. In terms of assembly, pentamer of two alpha chains, and one each of the beta, delta, and gamma (in immature muscle) or epsilon (in mature muscle) chains.

It is found in the postsynaptic cell membrane. Its subcellular location is the cell membrane. The enzyme catalyses K(+)(in) = K(+)(out). It carries out the reaction Na(+)(in) = Na(+)(out). Its function is as follows. After binding acetylcholine, the AChR responds by an extensive change in conformation that affects all subunits and leads to opening of an ion-conducting channel across the plasma membrane. This is Acetylcholine receptor subunit beta (chrnb1) from Xenopus laevis (African clawed frog).